Reading from the N-terminus, the 306-residue chain is Acetyl-coenzyme A carboxylase carboxyl transferase subunit beta (306 aa).

The CoA carboxyltransferase N-terminal domain occupies 28–297 (LWIKCPDTGQ…TPAGKPSTPV (270 aa)). A disordered region spans residues 287–306 (QTPAGKPSTPVAPEPVPDAA). Over residues 296-306 (PVAPEPVPDAA) the composition is skewed to pro residues.

This sequence belongs to the AccD/PCCB family. In terms of assembly, acetyl-CoA carboxylase is a heterohexamer composed of biotin carboxyl carrier protein (AccB), biotin carboxylase (AccC) and two subunits each of ACCase subunit alpha (AccA) and ACCase subunit beta (AccD).

Its subcellular location is the cytoplasm. It catalyses the reaction N(6)-carboxybiotinyl-L-lysyl-[protein] + acetyl-CoA = N(6)-biotinyl-L-lysyl-[protein] + malonyl-CoA. Its pathway is lipid metabolism; malonyl-CoA biosynthesis; malonyl-CoA from acetyl-CoA: step 1/1. Its function is as follows. Component of the acetyl coenzyme A carboxylase (ACC) complex. Biotin carboxylase (BC) catalyzes the carboxylation of biotin on its carrier protein (BCCP) and then the CO(2) group is transferred by the transcarboxylase to acetyl-CoA to form malonyl-CoA. This is Acetyl-coenzyme A carboxylase carboxyl transferase subunit beta from Methylorubrum populi (strain ATCC BAA-705 / NCIMB 13946 / BJ001) (Methylobacterium populi).